The sequence spans 432 residues: D-amino acid dehydrogenase (432 aa).

3 to 17 contacts FAD; it reads VVILGSGVVGVTSAW.

The protein belongs to the DadA oxidoreductase family. It depends on FAD as a cofactor.

It localises to the cell inner membrane. It catalyses the reaction a D-alpha-amino acid + A + H2O = a 2-oxocarboxylate + AH2 + NH4(+). Its pathway is amino-acid degradation; D-alanine degradation; NH(3) and pyruvate from D-alanine: step 1/1. Functionally, oxidative deamination of D-amino acids. This chain is D-amino acid dehydrogenase, found in Salmonella typhi.